A 440-amino-acid chain; its full sequence is Transposon Ty1-DR2 Gag polyprotein (440 aa).

Composition is skewed to polar residues over residues 1 to 31 and 137 to 168; these read MESQQLSQHSPISHGSACASVTSKEVQTTQD and VGTHLNTPSPESGNSFPDSSSAKSNMTSTNQH. 3 disordered regions span residues 1 to 75, 137 to 174, and 350 to 440; these read MESQ…PQAA, VGTHLNTPSPESGNSFPDSSSAKSNMTSTNQHVRPPPI, and QQES…PGTY. The interval 299–401 is RNA-binding; it reads NNGIPINNKV…NSQSRTARAH (103 aa). Residues 363-372 show a composition bias toward basic and acidic residues; it reads SPSDEKKDSR. Residues 373-409 are compositionally biased toward polar residues; it reads TYTNTTKPKSITRNSQKPNNSQSRTARAHNVSTSNNF. Basic and acidic residues predominate over residues 429 to 440; it reads NKHDLHLRPGTY.

As to quaternary structure, homotrimer.

The protein resides in the cytoplasm. Capsid protein (CA) is the structural component of the virus-like particle (VLP), forming the shell that encapsulates the retrotransposons dimeric RNA genome. The particles are assembled from trimer-clustered units and there are holes in the capsid shells that allow for the diffusion of macromolecules. CA also has nucleocapsid-like chaperone activity, promoting primer tRNA(i)-Met annealing to the multipartite primer-binding site (PBS), dimerization of Ty1 RNA and initiation of reverse transcription. The protein is Transposon Ty1-DR2 Gag polyprotein (TY1A-DR2) of Saccharomyces cerevisiae (strain ATCC 204508 / S288c) (Baker's yeast).